The sequence spans 151 residues: Small ribosomal subunit protein uS15 (151 aa).

This sequence belongs to the universal ribosomal protein uS15 family. As to quaternary structure, component of the small ribosomal subunit.

It localises to the cytoplasm. Component of the small ribosomal subunit. The ribosome is a large ribonucleoprotein complex responsible for the synthesis of proteins in the cell. This Gillichthys mirabilis (Long-jawed mudsucker) protein is Small ribosomal subunit protein uS15 (rps13).